A 130-amino-acid chain; its full sequence is Protein ApaG (130 aa).

Residues 3 to 127 (KAETRGISVT…FSLDSPHVRR (125 aa)) enclose the ApaG domain.

This chain is Protein ApaG, found in Methylobacterium radiotolerans (strain ATCC 27329 / DSM 1819 / JCM 2831 / NBRC 15690 / NCIMB 10815 / 0-1).